The following is a 351-amino-acid chain: Dihydroorotate dehydrogenase (quinone) (351 aa).

FMN-binding positions include 61–65 (AGLDK) and threonine 85. A substrate-binding site is contributed by lysine 65. 110-114 (NRMGF) serves as a coordination point for substrate. Asparagine 139 and asparagine 172 together coordinate FMN. Residue asparagine 172 participates in substrate binding. The active-site Nucleophile is serine 175. Residue asparagine 177 participates in substrate binding. FMN is bound by residues lysine 217 and threonine 245. A substrate-binding site is contributed by 246–247 (NT). FMN-binding positions include glycine 268, glycine 297, and 318–319 (YT).

This sequence belongs to the dihydroorotate dehydrogenase family. Type 2 subfamily. As to quaternary structure, monomer. FMN serves as cofactor.

Its subcellular location is the cell membrane. The enzyme catalyses (S)-dihydroorotate + a quinone = orotate + a quinol. It functions in the pathway pyrimidine metabolism; UMP biosynthesis via de novo pathway; orotate from (S)-dihydroorotate (quinone route): step 1/1. In terms of biological role, catalyzes the conversion of dihydroorotate to orotate with quinone as electron acceptor. This Xylella fastidiosa (strain M12) protein is Dihydroorotate dehydrogenase (quinone).